We begin with the raw amino-acid sequence, 163 residues long: Glutathione peroxidase 2 (163 aa).

The active site involves Cys-36.

This sequence belongs to the glutathione peroxidase family.

Its subcellular location is the cytoplasm. It catalyses the reaction 2 glutathione + H2O2 = glutathione disulfide + 2 H2O. May constitute a glutathione peroxidase-like protective system against oxidative stresses. This Caenorhabditis elegans protein is Glutathione peroxidase 2 (gpx-2).